The primary structure comprises 149 residues: SsrA-binding protein (149 aa).

The interval 121-149 (GKGEHDKRDTIKDREGKREVERAMKSRSR) is disordered.

This sequence belongs to the SmpB family.

The protein localises to the cytoplasm. Its function is as follows. Required for rescue of stalled ribosomes mediated by trans-translation. Binds to transfer-messenger RNA (tmRNA), required for stable association of tmRNA with ribosomes. tmRNA and SmpB together mimic tRNA shape, replacing the anticodon stem-loop with SmpB. tmRNA is encoded by the ssrA gene; the 2 termini fold to resemble tRNA(Ala) and it encodes a 'tag peptide', a short internal open reading frame. During trans-translation Ala-aminoacylated tmRNA acts like a tRNA, entering the A-site of stalled ribosomes, displacing the stalled mRNA. The ribosome then switches to translate the ORF on the tmRNA; the nascent peptide is terminated with the 'tag peptide' encoded by the tmRNA and targeted for degradation. The ribosome is freed to recommence translation, which seems to be the essential function of trans-translation. The sequence is that of SsrA-binding protein from Polaromonas sp. (strain JS666 / ATCC BAA-500).